Here is a 160-residue protein sequence, read N- to C-terminus: Ribonuclease H (160 aa).

An RNase H type-1 domain is found at Pro5 to Glu146. Mg(2+) is bound by residues Asp14, Glu52, Asp74, and Asp138.

Belongs to the RNase H family. In terms of assembly, monomer. The cofactor is Mg(2+).

Its subcellular location is the cytoplasm. It carries out the reaction Endonucleolytic cleavage to 5'-phosphomonoester.. Functionally, endonuclease that specifically degrades the RNA of RNA-DNA hybrids. In Acidiphilium cryptum (strain JF-5), this protein is Ribonuclease H.